Here is a 444-residue protein sequence, read N- to C-terminus: Ribosomal protein uS12 methylthiotransferase RimO (444 aa).

An MTTase N-terminal domain is found at 4-118; sequence IKYGVVSLGC…LSDAIKKSIE (115 aa). Cysteine 13, cysteine 48, cysteine 81, cysteine 155, cysteine 159, and cysteine 162 together coordinate [4Fe-4S] cluster. Positions 141–373 constitute a Radical SAM core domain; that stretch reads TTQKHYAYLR…MQRDIVKSIN (233 aa). The TRAM domain occupies 374-440; that stretch reads ADKVNKVYKV…EYDLIGVVCD (67 aa).

This sequence belongs to the methylthiotransferase family. RimO subfamily. It depends on [4Fe-4S] cluster as a cofactor.

It localises to the cytoplasm. The enzyme catalyses L-aspartate(89)-[ribosomal protein uS12]-hydrogen + (sulfur carrier)-SH + AH2 + 2 S-adenosyl-L-methionine = 3-methylsulfanyl-L-aspartate(89)-[ribosomal protein uS12]-hydrogen + (sulfur carrier)-H + 5'-deoxyadenosine + L-methionine + A + S-adenosyl-L-homocysteine + 2 H(+). Functionally, catalyzes the methylthiolation of an aspartic acid residue of ribosomal protein uS12. In Clostridium tetani (strain Massachusetts / E88), this protein is Ribosomal protein uS12 methylthiotransferase RimO.